We begin with the raw amino-acid sequence, 241 residues long: Aliphatic sulfonates import ATP-binding protein SsuB (241 aa).

The ABC transporter domain occupies 10 to 226 (VHLHGFSRSF…RPDHPAFMQL (217 aa)). 42–49 (GESGSGKT) contributes to the ATP binding site.

The protein belongs to the ABC transporter superfamily. Aliphatic sulfonates importer (TC 3.A.1.17.2) family. In terms of assembly, the complex is composed of two ATP-binding proteins (SsuB), two transmembrane proteins (SsuC) and a solute-binding protein (SsuA).

It is found in the cell inner membrane. It carries out the reaction ATP + H2O + aliphatic sulfonate-[sulfonate-binding protein]Side 1 = ADP + phosphate + aliphatic sulfonateSide 2 + [sulfonate-binding protein]Side 1.. Functionally, part of the ABC transporter complex SsuABC involved in aliphatic sulfonates import. Responsible for energy coupling to the transport system. In Delftia acidovorans (Pseudomonas acidovorans), this protein is Aliphatic sulfonates import ATP-binding protein SsuB.